A 302-amino-acid chain; its full sequence is Recombination-associated protein RdgC (302 aa).

Belongs to the RdgC family.

Its subcellular location is the cytoplasm. The protein resides in the nucleoid. May be involved in recombination. The protein is Recombination-associated protein RdgC of Xanthomonas campestris pv. campestris (strain 8004).